The following is a 107-amino-acid chain: UPF0145 protein ETA_21660 (107 aa).

Belongs to the UPF0145 family.

The polypeptide is UPF0145 protein ETA_21660 (Erwinia tasmaniensis (strain DSM 17950 / CFBP 7177 / CIP 109463 / NCPPB 4357 / Et1/99)).